Consider the following 197-residue polypeptide: Small ribosomal subunit protein uS7 (197 aa).

It belongs to the universal ribosomal protein uS7 family.

The protein is Small ribosomal subunit protein uS7 (RPS5) of Cicer arietinum (Chickpea).